Consider the following 89-residue polypeptide: Small ribosomal subunit protein uS15 (89 aa).

This sequence belongs to the universal ribosomal protein uS15 family. In terms of assembly, part of the 30S ribosomal subunit. Forms a bridge to the 50S subunit in the 70S ribosome, contacting the 23S rRNA.

Functionally, one of the primary rRNA binding proteins, it binds directly to 16S rRNA where it helps nucleate assembly of the platform of the 30S subunit by binding and bridging several RNA helices of the 16S rRNA. In terms of biological role, forms an intersubunit bridge (bridge B4) with the 23S rRNA of the 50S subunit in the ribosome. This Corynebacterium urealyticum (strain ATCC 43042 / DSM 7109) protein is Small ribosomal subunit protein uS15.